Consider the following 415-residue polypeptide: Fructose-1,6-bisphosphatase, chloroplastic (415 aa).

A chloroplast-targeting transit peptide spans 1-57; that stretch reads MASIGPATTTAVKLRSSIFNPQSSTLSPSQQCITFTKSLHSFPTATRHNVASGVRCM. Positions 135, 164, 185, 187, and 188 each coordinate Mg(2+). 188–191 is a substrate binding site; sequence DGSS. The interval 207-232 is involved in light regulation; that stretch reads SPNDECIVDSDHDDESQLSAEEQRCV. C231 and C236 are oxidised to a cystine. Substrate contacts are provided by N295, Y327, Y345, Y347, and K357. Residue E363 coordinates Mg(2+).

This sequence belongs to the FBPase class 1 family. As to quaternary structure, homotetramer. Mg(2+) is required as a cofactor.

It localises to the plastid. It is found in the chloroplast. The enzyme catalyses beta-D-fructose 1,6-bisphosphate + H2O = beta-D-fructose 6-phosphate + phosphate. It functions in the pathway carbohydrate biosynthesis; Calvin cycle. The polypeptide is Fructose-1,6-bisphosphatase, chloroplastic (Spinacia oleracea (Spinach)).